Consider the following 602-residue polypeptide: Elongation factor 4 (602 aa).

The tr-type G domain maps to 6-188 (RNVRNFSIIA…RITEVVPEPA (183 aa)). Residues 18 to 23 (DHGKST) and 135 to 138 (NKID) each bind GTP.

It belongs to the TRAFAC class translation factor GTPase superfamily. Classic translation factor GTPase family. LepA subfamily.

The protein localises to the cell membrane. The enzyme catalyses GTP + H2O = GDP + phosphate + H(+). Its function is as follows. Required for accurate and efficient protein synthesis under certain stress conditions. May act as a fidelity factor of the translation reaction, by catalyzing a one-codon backward translocation of tRNAs on improperly translocated ribosomes. Back-translocation proceeds from a post-translocation (POST) complex to a pre-translocation (PRE) complex, thus giving elongation factor G a second chance to translocate the tRNAs correctly. Binds to ribosomes in a GTP-dependent manner. This is Elongation factor 4 from Oceanobacillus iheyensis (strain DSM 14371 / CIP 107618 / JCM 11309 / KCTC 3954 / HTE831).